A 656-amino-acid chain; its full sequence is UV-damage endonuclease (656 aa).

7 disordered regions span residues Met-1–Gln-82, Pro-119–Val-146, Ile-175–Ala-194, Pro-241–Asp-264, Glu-492–Pro-515, Asp-550–Asn-620, and Lys-636–Gly-656. The span at Thr-13 to Pro-32 shows a compositional bias: low complexity. Basic and acidic residues-rich tracts occupy residues Ser-48–Gln-82 and Thr-135–Val-146. Residues Asp-550–Arg-561 are compositionally biased toward basic and acidic residues. Over residues Ala-568 to Arg-579 the composition is skewed to basic residues. The segment covering Glu-583–Ala-595 has biased composition (acidic residues). Basic and acidic residues predominate over residues Asp-596–Ala-614. A compositionally biased stretch (acidic residues) spans Glu-647–Gly-656.

It belongs to the uve1/UvsE family. The cofactor is Mg(2+).

Its function is as follows. Endonuclease for the repair of UV-irradiated DNA. Involved in the excision of cyclobutane pyrimidine dimers (CPD) and 6-4 pyrimidine pyrimidones (6-4PP) which forms the UV damage repair (UVDR) pathway. In Neurospora crassa (strain ATCC 24698 / 74-OR23-1A / CBS 708.71 / DSM 1257 / FGSC 987), this protein is UV-damage endonuclease (mus-18).